A 360-amino-acid chain; its full sequence is Hereditary hemochromatosis protein homolog (360 aa).

Positions 1–25 (MDRSAGLPVRLLLLLLLLLLWSVAP) are cleaved as a signal peptide. An alpha-1 region spans residues 26–127 (QALRPGSHSL…KVTKLRVVPE (102 aa)). Residues 26–319 (QALRPGSHSL…WEPSRSQDMI (294 aa)) are Extracellular-facing. 4 N-linked (GlcNAc...) asparagine glycosylation sites follow: Asn115, Asn143, Asn167, and Asn247. The interval 128 to 218 (SHILQVILGC…ELQRGVLGQQ (91 aa)) is alpha-2. Cystine bridges form between Cys137–Cys200 and Cys238–Cys295. Residues 219–310 (VPTLVKVTRH…GLDQPLTATW (92 aa)) form an alpha-3 region. The Ig-like C1-type domain maps to 220–309 (PTLVKVTRHW…PGLDQPLTAT (90 aa)). The connecting peptide stretch occupies residues 311–319 (EPSRSQDMI). A helical membrane pass occupies residues 320-340 (IGIISGITICAIFFVGILILV). At 341–360 (LRKRKVSGGTMGDYVLTECE) the chain is on the cytoplasmic side.

The protein belongs to the MHC class I family. In terms of assembly, binds TFR through the extracellular domain in a pH-dependent manner.

It localises to the cell membrane. Functionally, binds to transferrin receptor (TFR) and reduces its affinity for iron-loaded transferrin. In Rattus norvegicus (Rat), this protein is Hereditary hemochromatosis protein homolog (Hfe).